A 101-amino-acid polypeptide reads, in one-letter code: Phosphoribosyl-AMP cyclohydrolase (101 aa).

Residue aspartate 71 participates in Mg(2+) binding. Cysteine 72 lines the Zn(2+) pocket. Mg(2+) contacts are provided by aspartate 73 and aspartate 75. Residues cysteine 88 and cysteine 95 each contribute to the Zn(2+) site.

This sequence belongs to the PRA-CH family. Homodimer. Requires Mg(2+) as cofactor. The cofactor is Zn(2+).

The protein localises to the cytoplasm. The enzyme catalyses 1-(5-phospho-beta-D-ribosyl)-5'-AMP + H2O = 1-(5-phospho-beta-D-ribosyl)-5-[(5-phospho-beta-D-ribosylamino)methylideneamino]imidazole-4-carboxamide. It functions in the pathway amino-acid biosynthesis; L-histidine biosynthesis; L-histidine from 5-phospho-alpha-D-ribose 1-diphosphate: step 3/9. Functionally, catalyzes the hydrolysis of the adenine ring of phosphoribosyl-AMP. The sequence is that of Phosphoribosyl-AMP cyclohydrolase from Bacillus cereus (strain ATCC 10987 / NRS 248).